Reading from the N-terminus, the 412-residue chain is Probable tRNA sulfurtransferase (412 aa).

A disordered region spans residues 1-22; it reads MPDIFTDNTDKQDSDPSRQGFE. A THUMP domain is found at 82–190; sequence PRAAEAAADV…QNLAYVYLET (109 aa). ATP-binding positions include 208–209, Lys292, Gly314, and Gln323; that span reads LM.

The protein belongs to the ThiI family.

The protein localises to the cytoplasm. The enzyme catalyses [ThiI sulfur-carrier protein]-S-sulfanyl-L-cysteine + a uridine in tRNA + 2 reduced [2Fe-2S]-[ferredoxin] + ATP + H(+) = [ThiI sulfur-carrier protein]-L-cysteine + a 4-thiouridine in tRNA + 2 oxidized [2Fe-2S]-[ferredoxin] + AMP + diphosphate. The catalysed reaction is [ThiS sulfur-carrier protein]-C-terminal Gly-Gly-AMP + S-sulfanyl-L-cysteinyl-[cysteine desulfurase] + AH2 = [ThiS sulfur-carrier protein]-C-terminal-Gly-aminoethanethioate + L-cysteinyl-[cysteine desulfurase] + A + AMP + 2 H(+). It participates in cofactor biosynthesis; thiamine diphosphate biosynthesis. Functionally, catalyzes the ATP-dependent transfer of a sulfur to tRNA to produce 4-thiouridine in position 8 of tRNAs, which functions as a near-UV photosensor. Also catalyzes the transfer of sulfur to the sulfur carrier protein ThiS, forming ThiS-thiocarboxylate. This is a step in the synthesis of thiazole, in the thiamine biosynthesis pathway. The sulfur is donated as persulfide by IscS. The sequence is that of Probable tRNA sulfurtransferase from Methanosarcina acetivorans (strain ATCC 35395 / DSM 2834 / JCM 12185 / C2A).